The chain runs to 144 residues: Large ribosomal subunit protein uL15 (144 aa).

The interval methionine 1–leucine 57 is disordered. Residues arginine 21 to cysteine 31 show a composition bias toward gly residues.

This sequence belongs to the universal ribosomal protein uL15 family. Part of the 50S ribosomal subunit.

In terms of biological role, binds to the 23S rRNA. The chain is Large ribosomal subunit protein uL15 from Photobacterium profundum (strain SS9).